A 580-amino-acid polypeptide reads, in one-letter code: Cyclin-K (580 aa).

A disordered region spans residues 262–580 (KQQMPHHTPH…GGLGRAAWMR (319 aa)). Composition is skewed to low complexity over residues 263-277 (QQMPHHTPHQLQQPP) and 285-321 (VPQVQQSQPSQSSEPSQPQQKDPQQPAQQQQPAQQPK). Residues Ser324, Ser328, Ser329, and Ser340 each carry the phosphoserine modification. The span at 377 to 386 (PLAAALGEAE) shows a compositional bias: low complexity. Over residues 400 to 426 (QIPPPAHPAPVHQPPPLPHRPPPPPPS) the composition is skewed to pro residues. Residues 427–444 (SYMTGMSTTSSYMSGEGY) are compositionally biased toward low complexity. Pro residues predominate over residues 477–568 (VYPPNPPPPP…PPPIPPPGMP (92 aa)).

Belongs to the cyclin family. Cyclin C subfamily. As to quaternary structure, regulatory subunit of cyclin-dependent kinases. Identified in a complex with a kinase and the RNA polymerase II holoenzyme. Interacts with POLR2A. Interacts with CDK12 and CDK13. Interacts with CDK9 according to PubMed:10574912; does not interact with CDK9 according to PubMed:22012619. In terms of assembly, (Microbial infection) Interacts with human herpes virus 1 (HHV-1) transcriptional regulator ICP22. Widely expressed. Highest levels in testis.

It is found in the nucleus. Its function is as follows. Regulatory subunit of cyclin-dependent kinases that mediates activation of target kinases. Plays a role in transcriptional regulation via its role in regulating the phosphorylation of the C-terminal domain (CTD) of the large subunit of RNA polymerase II (POLR2A). This Homo sapiens (Human) protein is Cyclin-K (CCNK).